The sequence spans 295 residues: Pyridoxal 5'-phosphate synthase subunit PdxS (295 aa).

Asp25 lines the D-ribose 5-phosphate pocket. The active-site Schiff-base intermediate with D-ribose 5-phosphate is Lys82. Gly154 is a D-ribose 5-phosphate binding site. Arg166 is a binding site for D-glyceraldehyde 3-phosphate. D-ribose 5-phosphate-binding positions include Gly215 and 236–237; that span reads GS.

Belongs to the PdxS/SNZ family. In terms of assembly, in the presence of PdxT, forms a dodecamer of heterodimers.

It carries out the reaction aldehydo-D-ribose 5-phosphate + D-glyceraldehyde 3-phosphate + L-glutamine = pyridoxal 5'-phosphate + L-glutamate + phosphate + 3 H2O + H(+). It participates in cofactor biosynthesis; pyridoxal 5'-phosphate biosynthesis. In terms of biological role, catalyzes the formation of pyridoxal 5'-phosphate from ribose 5-phosphate (RBP), glyceraldehyde 3-phosphate (G3P) and ammonia. The ammonia is provided by the PdxT subunit. Can also use ribulose 5-phosphate and dihydroxyacetone phosphate as substrates, resulting from enzyme-catalyzed isomerization of RBP and G3P, respectively. This Listeria welshimeri serovar 6b (strain ATCC 35897 / DSM 20650 / CCUG 15529 / CIP 8149 / NCTC 11857 / SLCC 5334 / V8) protein is Pyridoxal 5'-phosphate synthase subunit PdxS.